A 305-amino-acid polypeptide reads, in one-letter code: UDP-3-O-acyl-N-acetylglucosamine deacetylase (305 aa).

Residues His-78, His-237, and Asp-241 each coordinate Zn(2+). His-264 serves as the catalytic Proton donor.

This sequence belongs to the LpxC family. Zn(2+) serves as cofactor.

It catalyses the reaction a UDP-3-O-[(3R)-3-hydroxyacyl]-N-acetyl-alpha-D-glucosamine + H2O = a UDP-3-O-[(3R)-3-hydroxyacyl]-alpha-D-glucosamine + acetate. The protein operates within glycolipid biosynthesis; lipid IV(A) biosynthesis; lipid IV(A) from (3R)-3-hydroxytetradecanoyl-[acyl-carrier-protein] and UDP-N-acetyl-alpha-D-glucosamine: step 2/6. In terms of biological role, catalyzes the hydrolysis of UDP-3-O-myristoyl-N-acetylglucosamine to form UDP-3-O-myristoylglucosamine and acetate, the committed step in lipid A biosynthesis. The sequence is that of UDP-3-O-acyl-N-acetylglucosamine deacetylase from Burkholderia cenocepacia (strain HI2424).